A 330-amino-acid polypeptide reads, in one-letter code: Ferredoxin--NADP reductase (330 aa).

FAD is bound by residues E35, Q43, Y48, V90, F123, D285, and T326.

Belongs to the ferredoxin--NADP reductase type 2 family. Homodimer. FAD is required as a cofactor.

It catalyses the reaction 2 reduced [2Fe-2S]-[ferredoxin] + NADP(+) + H(+) = 2 oxidized [2Fe-2S]-[ferredoxin] + NADPH. The chain is Ferredoxin--NADP reductase from Streptococcus equi subsp. zooepidemicus (strain MGCS10565).